The following is a 257-amino-acid chain: Urease accessory protein UreD (257 aa).

It belongs to the UreD family. UreD, UreF and UreG form a complex that acts as a GTP-hydrolysis-dependent molecular chaperone, activating the urease apoprotein by helping to assemble the nickel containing metallocenter of UreC. The UreE protein probably delivers the nickel.

Its subcellular location is the cytoplasm. Functionally, required for maturation of urease via the functional incorporation of the urease nickel metallocenter. The protein is Urease accessory protein UreD of Ruegeria pomeroyi (strain ATCC 700808 / DSM 15171 / DSS-3) (Silicibacter pomeroyi).